Consider the following 327-residue polypeptide: GMP reductase (327 aa).

Cys175 (thioimidate intermediate) is an active-site residue. Residue 204–227 participates in NADP(+) binding; the sequence is IIADGGIRTHGDIAKSIRFGASMV.

This sequence belongs to the IMPDH/GMPR family. GuaC type 2 subfamily.

It catalyses the reaction IMP + NH4(+) + NADP(+) = GMP + NADPH + 2 H(+). Catalyzes the irreversible NADPH-dependent deamination of GMP to IMP. It functions in the conversion of nucleobase, nucleoside and nucleotide derivatives of G to A nucleotides, and in maintaining the intracellular balance of A and G nucleotides. This Exiguobacterium sp. (strain ATCC BAA-1283 / AT1b) protein is GMP reductase.